Here is a 215-residue protein sequence, read N- to C-terminus: Pyrrolidone-carboxylate peptidase (215 aa).

Catalysis depends on residues glutamate 80, cysteine 143, and histidine 167.

This sequence belongs to the peptidase C15 family. As to quaternary structure, homotetramer.

The protein resides in the cytoplasm. The catalysed reaction is Release of an N-terminal pyroglutamyl group from a polypeptide, the second amino acid generally not being Pro.. Removes 5-oxoproline from various penultimate amino acid residues except L-proline. The polypeptide is Pyrrolidone-carboxylate peptidase (Brevibacillus brevis (strain 47 / JCM 6285 / NBRC 100599)).